A 262-amino-acid polypeptide reads, in one-letter code: Acyl-[acyl-carrier-protein]--UDP-N-acetylglucosamine O-acyltransferase (262 aa).

It belongs to the transferase hexapeptide repeat family. LpxA subfamily. In terms of assembly, homotrimer.

Its subcellular location is the cytoplasm. The catalysed reaction is a (3R)-hydroxyacyl-[ACP] + UDP-N-acetyl-alpha-D-glucosamine = a UDP-3-O-[(3R)-3-hydroxyacyl]-N-acetyl-alpha-D-glucosamine + holo-[ACP]. The protein operates within glycolipid biosynthesis; lipid IV(A) biosynthesis; lipid IV(A) from (3R)-3-hydroxytetradecanoyl-[acyl-carrier-protein] and UDP-N-acetyl-alpha-D-glucosamine: step 1/6. Involved in the biosynthesis of lipid A, a phosphorylated glycolipid that anchors the lipopolysaccharide to the outer membrane of the cell. This chain is Acyl-[acyl-carrier-protein]--UDP-N-acetylglucosamine O-acyltransferase, found in Histophilus somni (strain 129Pt) (Haemophilus somnus).